The sequence spans 540 residues: Probable ATP-dependent RNA helicase DDX28 (540 aa).

The short motif at 3–18 (LTRPVRLFSLVTRLLL) is the Mitochondrial targeting signal element. A Q motif motif is present at residues 126 to 156 (GSFADLGLEPRVLHALQEAAPEVVQPTTVQS). The region spanning 159–351 (IPSLLRGRHV…NKVASPDAVT (193 aa)) is the Helicase ATP-binding domain. 172–179 (AETGSGKT) is a binding site for ATP. A Nuclear export signal motif is present at residues 180–191 (LSYLLPLLQRLL). A DEAD motif is present at residues 286 to 289 (DEAD). The 160-residue stretch at 377–536 (KVAELVHILK…GLASSVKEPL (160 aa)) folds into the Helicase C-terminal domain. The Nuclear localization signal signature appears at 520–523 (RRRR).

The protein belongs to the DEAD box helicase family. In terms of assembly, monomer. Found in a complex with GRSF1, DHX30, FASTKD2 and FASTKD5. Associates with the 16S mitochondrial rRNA (16S mt-rRNA) and with the mitochondrial ribosome large subunit (39S). As to expression, expressed in all tissues tested, including brain, placenta, lung, liver, skeletal muscle, kidney, pancreas, leukocytes, colon, small intestine, ovary and prostate.

The protein resides in the nucleus. Its subcellular location is the mitochondrion. It is found in the mitochondrion matrix. It localises to the mitochondrion nucleoid. It catalyses the reaction ATP + H2O = ADP + phosphate + H(+). Its function is as follows. Plays an essential role in facilitating the proper assembly of the mitochondrial large ribosomal subunit and its helicase activity is essential for this function. May be involved in RNA processing or transport. Has RNA and Mg(2+)-dependent ATPase activity. The protein is Probable ATP-dependent RNA helicase DDX28 (DDX28) of Homo sapiens (Human).